A 218-amino-acid polypeptide reads, in one-letter code: Probable 2-aminoethanethiol dioxygenase (218 aa).

It depends on Fe cation as a cofactor.

The enzyme catalyses cysteamine + O2 = hypotaurine + H(+). The chain is Probable 2-aminoethanethiol dioxygenase (ado-1) from Dictyostelium discoideum (Social amoeba).